The sequence spans 103 residues: Histone H4 (103 aa).

Gly residues predominate over residues 1-14 (MTGRGKGGKGLGKG). A disordered region spans residues 1–20 (MTGRGKGGKGLGKGGAKRHR). Position 6 is an N6-acetyl-N6-methyllysine; alternate (lysine 6). Lysine 6, lysine 9, and lysine 13 each carry N6-methyllysine; alternate. Lysine 13 is subject to N6-acetyl-N6-methyllysine; alternate. Residues 17-21 (KRHRK) mediate DNA binding. Lysine 92 is modified (N6-glutaryllysine).

This sequence belongs to the histone H4 family. As to quaternary structure, the nucleosome is a histone octamer containing two molecules each of H2A, H2B, H3 and H4 assembled in one H3-H4 heterotetramer and two H2A-H2B heterodimers. The octamer wraps approximately 147 bp of DNA. Post-translationally, glutarylation at Lys-92 (H4K91glu) destabilizes nucleosomes by promoting dissociation of the H2A-H2B dimers from nucleosomes.

The protein resides in the nucleus. The protein localises to the chromosome. Core component of nucleosome. Nucleosomes wrap and compact DNA into chromatin, limiting DNA accessibility to the cellular machineries which require DNA as a template. Histones thereby play a central role in transcription regulation, DNA repair, DNA replication and chromosomal stability. DNA accessibility is regulated via a complex set of post-translational modifications of histones, also called histone code, and nucleosome remodeling. The polypeptide is Histone H4 (hH4-1) (Neurospora crassa (strain ATCC 24698 / 74-OR23-1A / CBS 708.71 / DSM 1257 / FGSC 987)).